The following is a 118-amino-acid chain: Large ribosomal subunit protein bL20 (118 aa).

Belongs to the bacterial ribosomal protein bL20 family.

Functionally, binds directly to 23S ribosomal RNA and is necessary for the in vitro assembly process of the 50S ribosomal subunit. It is not involved in the protein synthesizing functions of that subunit. In Pectobacterium atrosepticum (strain SCRI 1043 / ATCC BAA-672) (Erwinia carotovora subsp. atroseptica), this protein is Large ribosomal subunit protein bL20.